Consider the following 369-residue polypeptide: Delta(14)-sterol reductase (369 aa).

A run of 7 helical transmembrane segments spans residues 15 to 34 (QSVY…GEIL), 54 to 76 (CNGL…LGIV), 86 to 105 (LELL…ALYV), 146 to 168 (FFFV…AKSV), 178 to 195 (ILYQ…FVHE), 208 to 230 (RLGF…IQGW), and 240 to 262 (TVPA…RGAN). Residues lysine 265, lysine 269, leucine 289, tryptophan 294, and 301-302 (NY) each bind NADP(+). The chain crosses the membrane as a helical span at residues 275-297 (PIWGKPPVVVGGKLLVSGYWGIA). A helical transmembrane segment spans residues 317–336 (GISSPVPYFYPIYLLILLIW). NADP(+) is bound by residues aspartate 341, 345–349 (CAEKY), and tyrosine 356.

Belongs to the ERG4/ERG24 family.

It is found in the membrane. The enzyme catalyses 4,4-dimethyl-5alpha-cholesta-8,24-dien-3beta-ol + NADP(+) = 4,4-dimethyl-5alpha-cholesta-8,14,24-trien-3beta-ol + NADPH + H(+). It participates in steroid biosynthesis; zymosterol biosynthesis; zymosterol from lanosterol: step 2/6. Reduces the C14=C15 double bond of 4,4-dimethyl-cholesta-8,14,24-trienol to produce 4,4-dimethyl-cholesta-8,24-dienol. Required for cell division and expansion and is involved in proper organization of the embryo. The polypeptide is Delta(14)-sterol reductase (FK) (Arabidopsis thaliana (Mouse-ear cress)).